The following is a 259-amino-acid chain: 3-oxo-5-alpha-steroid 4-dehydrogenase 1 (259 aa).

5 helical membrane-spanning segments follow: residues 10 to 30 (LCLL…SIVG), 86 to 106 (VLLA…PVLI), 111 to 131 (PTLL…GYVQ), 146 to 166 (VTHP…VINI), and 206 to 226 (WCGF…LFTL).

The protein belongs to the steroid 5-alpha reductase family. Liver and prostate (at a low level).

The protein localises to the microsome membrane. The protein resides in the endoplasmic reticulum membrane. It catalyses the reaction a 3-oxo-5alpha-steroid + NADP(+) = a 3-oxo-Delta(4)-steroid + NADPH + H(+). It carries out the reaction 5alpha-pregnane-3,20-dione + NADP(+) = progesterone + NADPH + H(+). The enzyme catalyses 17beta-hydroxy-5alpha-androstan-3-one + NADP(+) = testosterone + NADPH + H(+). The catalysed reaction is androst-4-ene-3,17-dione + NADPH + H(+) = 5alpha-androstan-3,17-dione + NADP(+). Converts testosterone into 5-alpha-dihydrotestosterone and progesterone or corticosterone into their corresponding 5-alpha-3-oxosteroids. It plays a central role in sexual differentiation and androgen physiology. In Rattus norvegicus (Rat), this protein is 3-oxo-5-alpha-steroid 4-dehydrogenase 1.